The following is a 539-amino-acid chain: Dopamine receptor 2 (539 aa).

At 1-113 (MVDDNGSSPE…LPNDRVGLLA (113 aa)) the chain is on the extracellular side. 4 N-linked (GlcNAc...) asparagine glycosylation sites follow: Asn5, Asn31, Asn47, and Asn68. The chain crosses the membrane as a helical span at residues 114 to 134 (FLFLFSFATVFGNSLVILAVI). Residues 135-145 (RERYLHTATNY) lie on the Cytoplasmic side of the membrane. The helical transmembrane segment at 146–166 (FITSLAVADCLVGLVVMPFSA) threads the bilayer. Over 167 to 189 (LYEVLENTWFFGTDWCDIWRSLD) the chain is Extracellular. The cysteines at positions 182 and 261 are disulfide-linked. Residues 190–206 (VLFSTASILNLCVISLD) traverse the membrane as a helical segment. Topologically, residues 207–227 (RYWAITDPFSYPMRMTVKRAA) are cytoplasmic. A helical membrane pass occupies residues 228–248 (GLIAAVWICSSAISFPAIVWW). Residues 249-266 (RAARDGEMPAYKCTFTEH) are Extracellular-facing. A helical transmembrane segment spans residues 267–287 (LGYLVFSSTISFYLPLLVMVF). Residues 288–420 (TYCRIYRAAV…FAKEKKAAKT (133 aa)) are Cytoplasmic-facing. The tract at residues 326 to 387 (GGTTRDQQNQ…EPDDEPLSAL (62 aa)) is disordered. Positions 337–352 (SGGGGGGGGGGGGGGS) are enriched in gly residues. Residues 356–367 (SHSHSHHHHHNH) show a composition bias toward basic residues. The chain crosses the membrane as a helical span at residues 421–441 (LGIVMGVFIICWLPFFVVNLL). Over 442 to 453 (SGFCIECIEHEE) the chain is Extracellular. Residues 454-474 (IVSAIVTWLGWINSCMNPVIY) traverse the membrane as a helical segment. Residues 475–539 (ACWSRDFRRA…RHNSCEQTYI (65 aa)) are Cytoplasmic-facing. S-palmitoyl cysteine attachment occurs at residues Cys492 and Cys493.

This sequence belongs to the G-protein coupled receptor 1 family. Expressed in both central and peripheral nervous systems.

Its subcellular location is the cell membrane. Functionally, receptor for dopamine. The activity of this receptor is mediated by G proteins which activate adenylyl cyclase. Also capable of generating a calcium signal. In terms of antagonist responses, would be classed with the D1-like dopamine receptor group. This receptor is an attractive candidate for initiating biochemical cascades underlying olfactory learning. The chain is Dopamine receptor 2 (Dop1R2) from Drosophila melanogaster (Fruit fly).